The following is a 360-amino-acid chain: Peptide chain release factor 1 (360 aa).

The residue at position 234 (Gln234) is an N5-methylglutamine.

The protein belongs to the prokaryotic/mitochondrial release factor family. Methylated by PrmC. Methylation increases the termination efficiency of RF1.

Its subcellular location is the cytoplasm. Functionally, peptide chain release factor 1 directs the termination of translation in response to the peptide chain termination codons UAG and UAA. In Clostridium botulinum (strain Alaska E43 / Type E3), this protein is Peptide chain release factor 1.